Here is a 203-residue protein sequence, read N- to C-terminus: Thymidylate kinase (203 aa).

Residue 10–17 (GIDGAGKS) participates in ATP binding.

Belongs to the thymidylate kinase family.

The catalysed reaction is dTMP + ATP = dTDP + ADP. Its function is as follows. Phosphorylation of dTMP to form dTDP in both de novo and salvage pathways of dTTP synthesis. This Cupriavidus necator (strain ATCC 17699 / DSM 428 / KCTC 22496 / NCIMB 10442 / H16 / Stanier 337) (Ralstonia eutropha) protein is Thymidylate kinase.